Consider the following 265-residue polypeptide: Hydroxyethylthiazole kinase (265 aa).

Substrate is bound at residue Met-41. Residues Arg-117 and Ser-163 each contribute to the ATP site. Substrate is bound at residue Gly-190.

This sequence belongs to the Thz kinase family. It depends on Mg(2+) as a cofactor.

The enzyme catalyses 5-(2-hydroxyethyl)-4-methylthiazole + ATP = 4-methyl-5-(2-phosphooxyethyl)-thiazole + ADP + H(+). The protein operates within cofactor biosynthesis; thiamine diphosphate biosynthesis; 4-methyl-5-(2-phosphoethyl)-thiazole from 5-(2-hydroxyethyl)-4-methylthiazole: step 1/1. Catalyzes the phosphorylation of the hydroxyl group of 4-methyl-5-beta-hydroxyethylthiazole (THZ). The protein is Hydroxyethylthiazole kinase of Pediococcus pentosaceus (strain ATCC 25745 / CCUG 21536 / LMG 10740 / 183-1w).